A 459-amino-acid polypeptide reads, in one-letter code: tRNA modification GTPase MnmE (459 aa).

R23, E86, and R125 together coordinate (6S)-5-formyl-5,6,7,8-tetrahydrofolate. The 160-residue stretch at 221-380 (GIDAVIIGKP…LENAITELFV (160 aa)) folds into the TrmE-type G domain. N231 is a binding site for K(+). GTP is bound by residues 231-236 (NVGKSS), 250-256 (TDIPGTT), and 275-278 (DTAG). A Mg(2+)-binding site is contributed by S235. 3 residues coordinate K(+): T250, I252, and T255. T256 is a Mg(2+) binding site. K459 serves as a coordination point for (6S)-5-formyl-5,6,7,8-tetrahydrofolate.

This sequence belongs to the TRAFAC class TrmE-Era-EngA-EngB-Septin-like GTPase superfamily. TrmE GTPase family. Homodimer. Heterotetramer of two MnmE and two MnmG subunits. Requires K(+) as cofactor.

It is found in the cytoplasm. Functionally, exhibits a very high intrinsic GTPase hydrolysis rate. Involved in the addition of a carboxymethylaminomethyl (cmnm) group at the wobble position (U34) of certain tRNAs, forming tRNA-cmnm(5)s(2)U34. The polypeptide is tRNA modification GTPase MnmE (Acetivibrio thermocellus (strain ATCC 27405 / DSM 1237 / JCM 9322 / NBRC 103400 / NCIMB 10682 / NRRL B-4536 / VPI 7372) (Clostridium thermocellum)).